Here is a 535-residue protein sequence, read N- to C-terminus: Unconventional prefoldin RPB5 interactor 1 (535 aa).

Residue Met1 is modified to N-acetylmethionine. Disordered regions lie at residues 1-23, 223-330, 352-383, and 412-431; these read MEAP…PALV, LLGE…VGDN, KNTT…QELP, and SRSR…AAEF. The span at 7–18 shows a compositional bias: pro residues; sequence ETPPDPSPPSAP. Polar residues-rich tracts occupy residues 253–265 and 276–296; these read TNVN…TDSH and EPFS…SSSY. The span at 299–320 shows a compositional bias: acidic residues; that stretch reads DDDDDDDDDDDDDNIDDDDGDN. Ser372 carries the phosphoserine; by RPS6KB1 modification. Thr373 bears the Phosphothreonine mark. Residues 417 to 427 show a composition bias toward polar residues; the sequence is NSVCSDTSESS. The residue at position 442 (Ser442) is a Phosphoserine.

The protein belongs to the RNA polymerase II subunit 5-mediating protein family. Homodimer. Component of the PAQosome complex which is responsible for the biogenesis of several protein complexes and which consists of R2TP complex members RUVBL1, RUVBL2, RPAP3 and PIH1D1, URI complex members PFDN2, PFDN6, PDRG1, UXT and URI1 as well as ASDURF, POLR2E and DNAAF10/WDR92. Interacts with POLR2E/RPB5, RUVBL2 and RUVBL1. Interacts with PFDN2, PFDN4 and STAP1; the interactions are phosphorylation-dependent and occur in a growth-dependent manner in the mitochondrion. Interacts with UXT. Interacts with PPP1CC; the interaction is phosphorylation-dependent and occurs in a growth factor-dependent manner. Interacts (via the middle C-terminal region) with GTF2F1 and GTF2F2. Interacts with DMAP1. Interacts with TSC1 and TSC2. Interacts with PRPF8 and EFTUD2 in a ZNHIT2-dependent manner. Phosphorylated. Phosphorylation occurs essentially on serine residues. Phosphorylation occurs in response to androgen treatment in prostate cancer cells in a mTOR-dependent manner. Phosphorylated; hyperhosphorylated in mitochondria in a mTORC-dependent signaling pathway. Phosphorylated at Ser-372 by RPS6KB1 in a growth factor- and rapamycin-dependent manner. S6K1-mediated mitochondrial phosphorylation at Ser-372 disrupts the URI1-PPP1CC complex in the mitochondrion, relieves PPP1CC phosphatase inhibition activity and hence engages a negative feedback diminishing RPS6KB1 kinase activity, preventing sustained S6K1-dependent signaling. In terms of tissue distribution, ubiquitous. Expressed in ovarian cancers (at protein level). Expressed strongly in skeletal muscle. Expressed weakly in brain, heart, pancreas and in prostate epithelial cells.

The protein localises to the nucleus. Its subcellular location is the cytoplasm. It is found in the mitochondrion. It localises to the cell projection. The protein resides in the dendrite. Functionally, involved in gene transcription regulation. Acts as a transcriptional repressor in concert with the corepressor UXT to regulate androgen receptor (AR) transcription. May act as a tumor suppressor to repress AR-mediated gene transcription and to inhibit anchorage-independent growth in prostate cancer cells. Required for cell survival in ovarian cancer cells. Together with UXT, associates with chromatin to the NKX3-1 promoter region. Antagonizes transcriptional modulation via hepatitis B virus X protein. Plays a central role in maintaining S6K1 signaling and BAD phosphorylation under normal growth conditions thereby protecting cells from potential deleterious effects of sustained S6K1 signaling. The URI1-PPP1CC complex acts as a central component of a negative feedback mechanism that counteracts excessive S6K1 survival signaling to BAD in response to growth factors. Mediates inhibition of PPP1CC phosphatase activity in mitochondria. Coordinates the regulation of nutrient-sensitive gene expression availability in a mTOR-dependent manner. Seems to be a scaffolding protein able to assemble a prefoldin-like complex that contains PFDs and proteins with roles in transcription and ubiquitination. In Homo sapiens (Human), this protein is Unconventional prefoldin RPB5 interactor 1 (URI1).